Consider the following 116-residue polypeptide: Large ribosomal subunit protein bL19 (116 aa).

Belongs to the bacterial ribosomal protein bL19 family.

This protein is located at the 30S-50S ribosomal subunit interface and may play a role in the structure and function of the aminoacyl-tRNA binding site. The protein is Large ribosomal subunit protein bL19 of Actinobacillus succinogenes (strain ATCC 55618 / DSM 22257 / CCUG 43843 / 130Z).